The following is a 215-amino-acid chain: Nascent polypeptide-associated complex subunit alpha (215 aa).

Positions 1-82 are disordered; the sequence is MPGEATETVP…EKKARKAMSK (82 aa). The segment covering 9–28 has biased composition (polar residues); it reads VPVTEQEMQQPQAETGSGTE. Acidic residues predominate over residues 29–42; that stretch reads SDSDESVPDLEEGD. Over residues 44-57 the composition is skewed to low complexity; it reads AQTQTQQAQLAAAA. Residues 70 to 135 enclose the NAC-A/B domain; the sequence is SRSEKKARKA…AKIEDLSQQA (66 aa). Ser166 carries the phosphoserine modification. One can recognise a UBA domain in the interval 176 to 213; it reads VEVKDIELVMSQANVSRAKAVRALKNNNNDIVNAIMEL.

Belongs to the NAC-alpha family.

In terms of biological role, may promote appropriate targeting of ribosome-nascent polypeptide complexes. The chain is Nascent polypeptide-associated complex subunit alpha (naca) from Danio rerio (Zebrafish).